Consider the following 377-residue polypeptide: MNRSDTLDLSLNLMRRPSVTPEDHDCQAVMAERLAKAGFQIENMRFDDVDNLWARRGTQQPVFCFAGHTDVVPTGNLDNWNSDPFAPEVRDGILYGRGAADMKTALAAMVVASERFVEKHPNHKGSIAFLITSDEEGPSINGTVKVIETLEARHEKMTWCLVGEPSSTHQLGDIIKNGRRGSLNAVLTIKGKQGHVAYPHLARNPIHLASAAIHELCETVWDQGNEYFPATSFQISNIHAGTGATNVVPGTMAVTFNFRYSTEVTAEQLKERVVEVLQRHGLDYDIVWTHSGLPFLTPVGELVNAATHAIKTVTGVDTQLSTSGGTSDGRFIAPTGAQVLELGVLNASIHQINEHVNVADLEPLAEIYEKILEQLLA.

Residue His-68 coordinates Zn(2+). The active site involves Asp-70. Asp-101 serves as a coordination point for Zn(2+). The active-site Proton acceptor is Glu-135. Residues Glu-136, Glu-164, and His-350 each contribute to the Zn(2+) site.

The protein belongs to the peptidase M20A family. DapE subfamily. In terms of assembly, homodimer. Zn(2+) is required as a cofactor. Requires Co(2+) as cofactor.

The catalysed reaction is N-succinyl-(2S,6S)-2,6-diaminopimelate + H2O = (2S,6S)-2,6-diaminopimelate + succinate. The protein operates within amino-acid biosynthesis; L-lysine biosynthesis via DAP pathway; LL-2,6-diaminopimelate from (S)-tetrahydrodipicolinate (succinylase route): step 3/3. Its function is as follows. Catalyzes the hydrolysis of N-succinyl-L,L-diaminopimelic acid (SDAP), forming succinate and LL-2,6-diaminopimelate (DAP), an intermediate involved in the bacterial biosynthesis of lysine and meso-diaminopimelic acid, an essential component of bacterial cell walls. The chain is Succinyl-diaminopimelate desuccinylase from Acinetobacter baylyi (strain ATCC 33305 / BD413 / ADP1).